The chain runs to 442 residues: MHDIKSIRDNPQGFDAALTRRGLSPQSSHLLAIDERRRAAILASEQAQARRNAASKEIGEAKKAKDDARASALMEEVAKLKTTMPELEAAAKQADEELARELSAIPNLPLDEVPDGKDEHDNVERHVFGARRNYAFAPRPHDEIGAALGMDFESAAKLSGARFVVLKKGLARLERAIGQFMLDLHTTEHGYTEINPPLLVRNDVMFGTGQLPKFEDDQFWAVRGELLIAPDERLKTERLGLIPTAEVALTNLVRESIVDEKELPMRLTALTPCFRAEAGAAGRDTRGMIRQHQFTKVELVSITTPETSKDEHERMLACAEEVLRRLDLHYRVITLCTGDMGFSSQKTYDIEVWMPGQGDGGAFREISSCSVCGDFQARRMDARYRASDGKPRFVHTLNGSGTAVGRALIAVMETYQQADGSIAVPDVLQPYMGGLKVVAAEP.

244–246 is an L-serine binding site; the sequence is TAE. 275-277 contributes to the ATP binding site; the sequence is RAE. Residue Glu298 participates in L-serine binding. 365-368 contacts ATP; it reads EISS. Ser400 is a binding site for L-serine.

It belongs to the class-II aminoacyl-tRNA synthetase family. Type-1 seryl-tRNA synthetase subfamily. As to quaternary structure, homodimer. The tRNA molecule binds across the dimer.

The protein resides in the cytoplasm. The catalysed reaction is tRNA(Ser) + L-serine + ATP = L-seryl-tRNA(Ser) + AMP + diphosphate + H(+). The enzyme catalyses tRNA(Sec) + L-serine + ATP = L-seryl-tRNA(Sec) + AMP + diphosphate + H(+). It functions in the pathway aminoacyl-tRNA biosynthesis; selenocysteinyl-tRNA(Sec) biosynthesis; L-seryl-tRNA(Sec) from L-serine and tRNA(Sec): step 1/1. Functionally, catalyzes the attachment of serine to tRNA(Ser). Is also able to aminoacylate tRNA(Sec) with serine, to form the misacylated tRNA L-seryl-tRNA(Sec), which will be further converted into selenocysteinyl-tRNA(Sec). The sequence is that of Serine--tRNA ligase from Bradyrhizobium sp. (strain BTAi1 / ATCC BAA-1182).